Reading from the N-terminus, the 874-residue chain is Alanine--tRNA ligase (874 aa).

Zn(2+)-binding residues include histidine 562, histidine 566, cysteine 665, and histidine 669.

Belongs to the class-II aminoacyl-tRNA synthetase family. Requires Zn(2+) as cofactor.

Its subcellular location is the cytoplasm. It catalyses the reaction tRNA(Ala) + L-alanine + ATP = L-alanyl-tRNA(Ala) + AMP + diphosphate. Its function is as follows. Catalyzes the attachment of alanine to tRNA(Ala) in a two-step reaction: alanine is first activated by ATP to form Ala-AMP and then transferred to the acceptor end of tRNA(Ala). Also edits incorrectly charged Ser-tRNA(Ala) and Gly-tRNA(Ala) via its editing domain. In Pseudomonas entomophila (strain L48), this protein is Alanine--tRNA ligase.